We begin with the raw amino-acid sequence, 478 residues long: Zinc metalloproteinase/disintegrin ussurin (478 aa).

The N-terminal stretch at 1–20 (MIQVLLVTICLAAFPYQGSS) is a signal peptide. A propeptide spanning residues 21–190 (IILESGNVND…KKASPLVVTT (170 aa)) is cleaved from the precursor. In terms of domain architecture, Peptidase M12B spans 193–389 (RYVELVVVAD…RNPQCILNKP (197 aa)). Residues E196 and D280 each contribute to the Ca(2+) site. 3 disulfides stabilise this stretch: C304/C384, C344/C368, and C346/C351. H329 serves as a coordination point for Zn(2+). E330 is a catalytic residue. Zn(2+)-binding residues include H333 and H339. 2 residues coordinate Ca(2+): C384 and N387. The propeptide occupies 390–413 (LRTDIVSTPVSGNELLEAGEECDC). The region spanning 397–478 (TPVSGNELLE…AGCPRNPFHA (82 aa)) is the Disintegrin domain. 6 disulfides stabilise this stretch: C411-C426, C413-C421, C420-C443, C434-C440, C439-C464, and C452-C471. The Cell attachment site motif lies at 456 to 458 (RGD).

The protein belongs to the venom metalloproteinase (M12B) family. P-II subfamily. P-IIa sub-subfamily. Monomer. Requires Zn(2+) as cofactor. Expressed by the venom gland.

It is found in the secreted. Its function is as follows. Impairs hemostasis in the envenomed animal. In terms of biological role, inhibits platelet aggregation induced by ADP, thrombin, platelet-activating factor and collagen. Acts by inhibiting fibrinogen interaction with platelet receptors GPIIb/GPIIIa (ITGA2B/ITGB3). This Gloydius ussuriensis (Ussuri mamushi) protein is Zinc metalloproteinase/disintegrin ussurin.